Reading from the N-terminus, the 132-residue chain is uncharacterized protein (132 aa).

The first 25 residues, 1-25 (MRFTKVVGFLSVLGLAAVFPLTAQA), serve as a signal peptide directing secretion.

This is an uncharacterized protein from Bacillus subtilis (strain 168).